The chain runs to 491 residues: Pyruvate carboxylase subunit A (491 aa).

The 445-residue stretch at 1–445 (MFSKILVANR…HTHFVDEYRR (445 aa)) folds into the Biotin carboxylation domain. Lys-116, Glu-200, and His-235 together coordinate ATP. Residues 120-316 (KKLMKKAGVP…LVKEQIRVAS (197 aa)) form the ATP-grasp domain. Arg-291 is a catalytic residue.

In terms of assembly, heterooctamer of four A and four B subunits. Mg(2+) serves as cofactor. The cofactor is Mn(2+). Co(2+) is required as a cofactor.

The catalysed reaction is hydrogencarbonate + pyruvate + ATP = oxaloacetate + ADP + phosphate + H(+). Its pathway is carbohydrate biosynthesis; gluconeogenesis. With respect to regulation, inhibited by ADP and alpha-ketoglutarate. In terms of biological role, pyruvate carboxylase catalyzes a 2-step reaction, involving the ATP-dependent carboxylation of the covalently attached biotin in the first step and the transfer of the carboxyl group to pyruvate in the second. The chain is Pyruvate carboxylase subunit A (pycA) from Methanothermobacter thermautotrophicus (strain ATCC 29096 / DSM 1053 / JCM 10044 / NBRC 100330 / Delta H) (Methanobacterium thermoautotrophicum).